A 904-amino-acid chain; its full sequence is Toll-like receptor 3 (904 aa).

The first 26 residues, 1–26 (MSRPLPYHIHFFSGLLTCWILCTSSA), serve as a signal peptide directing secretion. The LRRNT domain maps to 27 to 52 (HKCTVRHEVADCSHLKLTQIPDDLPT). Topologically, residues 27–705 (HKCTVRHEVA…PCKDSAPFEL (679 aa)) are lumenal. Cys29 and Cys38 are joined by a disulfide. 3 N-linked (GlcNAc...) asparagine glycosylation sites follow: Asn53, Asn58, and Asn71. LRR repeat units lie at residues 53-74 (NITVLNLTHNQLRRLPPANFTR), 77-98 (QLTTLDGGFNSISKLEPELCQS), 101-122 (WLEILNLQHNEISQLSDKTFIF), 125-146 (NLTELHLMSNSIQKIKNDPFKN), 149-170 (NLIKLDLSHNGLSSTKLGTQLQ), and 173-194 (NLQELLLSNNKISSLTPGEFDF). The cysteines at positions 96 and 123 are disulfide-linked. An N-linked (GlcNAc...) asparagine glycan is attached at Asn125. Asn197 carries an N-linked (GlcNAc...) asparagine glycan. LRR repeat units follow at residues 199-220 (SLKRLELSSNQIKEFSPGCFHT) and 223-245 (ELSGLSLNNAKLSPSLTEKLCLE). N-linked (GlcNAc...) asparagine glycans are attached at residues Asn248, Asn253, Asn276, and Asn292. 14 LRR repeats span residues 250-271 (SIENLSLSSNQLDTISHTTFDG), 276-297 (NLTTLDLSRNSLRVMGNDSFAW), 300-321 (HLEYLSLEYNNIEHLSSRSFYG), 324-345 (NLRRLDLRRSFTRQSISLTSLP), 357-378 (CLEYLNMDDNNFPGIKRNTFTG), 381-401 (RLKFLSLSNSFSSLRTLTNET), 409-430 (PLLLLDLTKNKISKIQSGAFSW), 433-455 (HLEVLDLGLNEIGQELTGQEWRG), 466-487 (YNKYLELTTNSFTSVPSLQRLM), 508-529 (NLVILDLSNNNIANINDELLKG), 532-553 (KLEILDLQHNNLARLWKHANPG), 564-585 (HLHILNLGSNGFDEIPVEAFKD), 588-609 (ELKSIDLGMNNLNILPQSVFDN), and 612-633 (SLKSLSLQKNLITSVQKTVFGP). Asn399 carries an N-linked (GlcNAc...) asparagine glycan. N-linked (GlcNAc...) asparagine glycosylation is found at Asn637, Asn663, and Asn668. Positions 646 to 699 (NPFDCTCESIAWFVNWINITHTNISELSNHYLCNTPPQYHGYPVMLFDVSPCKD) constitute an LRRCT domain. 2 disulfides stabilise this stretch: Cys650–Cys678 and Cys652–Cys697. A helical transmembrane segment spans residues 706–726 (LFMININILLIFIFIVLLIHF). The Cytoplasmic portion of the chain corresponds to 727 to 904 (EGWRISFYWN…VALGSRNSAH (178 aa)). The 144-residue stretch at 754-897 (FEYAAYIIHA…AFHHKLKVAL (144 aa)) folds into the TIR domain. Tyr759 carries the phosphotyrosine modification. Glycyl lysine isopeptide (Lys-Gly) (interchain with G-Cter in ubiquitin) cross-links involve residues Lys765, Lys812, and Lys831. Tyr858 is modified (phosphotyrosine).

Belongs to the Toll-like receptor family. As to quaternary structure, monomer and homodimer; dimerization is triggered by ligand-binding, the signaling unit is composed of one ds-RNA of around 40 bp and two TLR3 molecules, and lateral clustering of signaling units along the length of the ds-RNA ligand is required for TLR3 signal transduction. Interacts (via transmembrane domain) with UNC93B1; the interaction is required for transport from the ER to the endosomes. Interacts with TICAM1 (via the TIR domain) in response to poly(I:C) and this interaction is enhanced in the presence of WDFY1. Interacts with SRC; upon binding of double-stranded RNA. The tyrosine-phosphorylated form (via TIR domain) interacts with WDFY1 (via WD repeat 2) in response to poly(I:C). In terms of processing, TLR3 signaling requires a proteolytic cleavage mediated by cathepsins CTSB and CTSH, the cleavage occurs between amino acids 252 and 346. The cleaved form of TLR3 is the predominant form found in endosomes. Post-translationally, ubiquitinated by TRIM3; leading to recognition and sorting of polyubiquitinated TLR3 by the ESCRT complexes. Ubiquitinated by ZNRF1 via 'Lys-63'-linked ubiquitin chains; leading to TLR3 lysosomal trafficking and degradation. Ubiquitinated by RNF170 at Lys-765 via 'Lys-48'-linked ubiquitin chains; leading to TLR3 proteasomal degradation.

The protein localises to the endoplasmic reticulum membrane. Its subcellular location is the endosome membrane. It is found in the early endosome. Its function is as follows. Key component of innate and adaptive immunity. TLRs (Toll-like receptors) control host immune response against pathogens through recognition of molecular patterns specific to microorganisms. TLR3 is a nucleotide-sensing TLR which is activated by double-stranded RNA, a sign of viral infection. Acts via the adapter TRIF/TICAM1, leading to NF-kappa-B activation, IRF3 nuclear translocation, cytokine secretion and the inflammatory response. In Bos taurus (Bovine), this protein is Toll-like receptor 3 (TLR3).